The chain runs to 1330 residues: ESX-3 secretion system protein EccC3 (1330 aa).

2 helical membrane passes run 43–63 and 65–85; these read LPYLIGILIVGMIVALVATGM and VISPQTLFFPFVLLLAATALY. 3 consecutive FtsK domains span residues 456 to 662, 811 to 1000, and 1090 to 1280; these read GEPL…SVSR, RDPL…RDSN, and LAPV…ADSG. Residues 479–486, 829–836, and 1107–1114 each bind ATP; these read GMTGSGKS, GGPKSGKS, and GDARSGKT.

Part of the ESX-3 / type VII secretion system (T7SS), which is composed of cytosolic and membrane components. The ESX-3 membrane complex is composed of EccB3, EccC3, EccD3 and EccE3.

It localises to the cell inner membrane. Functionally, part of the ESX-3 specialized secretion system, which is important for iron and zinc uptake or homeostasis. The sequence is that of ESX-3 secretion system protein EccC3 from Mycobacterium tuberculosis (strain CDC 1551 / Oshkosh).